We begin with the raw amino-acid sequence, 374 residues long: MNALFIIIFMIVVGAIIGGITNVIAIRMLFHPFKPYYIFKFRVPFTPGLIPKRREEIATKIGQVIEEHLLTETLINEKLKSEQSQQAIESMIQQQLQKLTKDQLSIKQITSQIDIDLEQVLQTNGNQYIESQLNNYYTKHQNQTIASLLPNQLVTFLDQHVDNATDLLCDRARNYLSSAKGTQDINDMLDTFFNEKGKLFGMLQMFMTKESIADRIQQELIRLTSHPKARTIVTSLITNEYQTFKDKPLNELLDASQFNEIAENLSVYVTTYASKQANKPVVTLMPQFVDYLEGQLSSKLANLIIEKLSIHLSTIMKKVDLRGLIEEQINTFDLDYIEKLIIEIANKELKLIMSLGFILGGIIGFFQGLVAIFV.

2 consecutive transmembrane segments (helical) span residues 4-24 (LFII…TNVI) and 354-374 (SLGF…AIFV).

It belongs to the UPF0754 family.

The protein resides in the cell membrane. This Staphylococcus aureus (strain MSSA476) protein is UPF0754 membrane protein SAS1767.